A 439-amino-acid polypeptide reads, in one-letter code: Histidine--tRNA ligase (439 aa).

Belongs to the class-II aminoacyl-tRNA synthetase family. As to quaternary structure, homodimer.

Its subcellular location is the cytoplasm. It carries out the reaction tRNA(His) + L-histidine + ATP = L-histidyl-tRNA(His) + AMP + diphosphate + H(+). The protein is Histidine--tRNA ligase of Leptospira borgpetersenii serovar Hardjo-bovis (strain L550).